A 1551-amino-acid chain; its full sequence is ABC-type transporter phomO (1551 aa).

Helical transmembrane passes span 34 to 54 (LYFE…LLAA), 110 to 130 (CTAG…CTTV), 139 to 159 (SVPA…LAHF), 172 to 192 (SSSL…APLV), 202 to 222 (GSAL…LIAV), 314 to 334 (LGLY…FTLA), and 358 to 378 (GLIG…GWYW). The ABC transmembrane type-1 1 domain occupies 326 to 599 (LCLAGFTLAQ…LLQIIPSFGA (274 aa)). A glycan (N-linked (GlcNAc...) asparagine) is linked at N384. Transmembrane regions (helical) follow at residues 428–448 (LAYA…TWML), 452–472 (VGPP…ASTY), 535–555 (LIVG…VLVF), and 577–597 (LIWI…IPSF). The region spanning 645 to 861 (IHNSSFSYTD…VEDENGDVDN (217 aa)) is the ABC transporter 1 domain. An N-linked (GlcNAc...) asparagine glycan is attached at N647. Residue 678–685 (GPAGCGKS) participates in ATP binding. N-linked (GlcNAc...) asparagine glycosylation is present at N721. The tract at residues 843–889 (YQFPPSQADVEDENGDVDNGAENTRPRESSHTTEAQSGPPEPKSKPT) is disordered. 4 consecutive transmembrane segments (helical) span residues 903–923 (SIGF…AFCL), 959–979 (VLPL…IVPL), 1027–1044 (LFNT…VILI), and 1137–1157 (LVLN…AVGL). An ABC transmembrane type-1 2 domain is found at 910-1199 (VLFIGGGIIF…LLTAWTSLET (290 aa)). The N-linked (GlcNAc...) asparagine glycan is linked to N1179. Over residues 1219-1228 (DVLVRPDSLD) the composition is skewed to basic and acidic residues. The interval 1219–1296 (DVLVRPDSLD…HEATTITTTS (78 aa)) is disordered. Residues 1259 to 1270 (YDDDDESDENTD) show a composition bias toward acidic residues. An ABC transporter 2 domain is found at 1287–1535 (HEATTITTTS…SDIFAFFGRS (249 aa)). Residue 1323-1330 (GRTGSGKS) coordinates ATP. N1486 carries an N-linked (GlcNAc...) asparagine glycan.

It belongs to the ABC transporter superfamily. ABCC family. Conjugate transporter (TC 3.A.1.208) subfamily.

It is found in the membrane. Functionally, ABC-type transporter; part of the gene cluster that mediates the biosynthesis of the phomopsins, a group of hexapeptide mycotoxins which infects lupins and causes lupinosis disease in livestock. The sequence is that of ABC-type transporter phomO from Diaporthe leptostromiformis (Lupinosis disease fungus).